The primary structure comprises 322 residues: Transaldolase (322 aa).

The Schiff-base intermediate with substrate role is filled by Lys132. 2 positions are modified to phosphoserine: Ser268 and Ser269.

The protein belongs to the transaldolase family. Type 1 subfamily. As to quaternary structure, homodimer.

The catalysed reaction is D-sedoheptulose 7-phosphate + D-glyceraldehyde 3-phosphate = D-erythrose 4-phosphate + beta-D-fructose 6-phosphate. It functions in the pathway carbohydrate degradation; pentose phosphate pathway; D-glyceraldehyde 3-phosphate and beta-D-fructose 6-phosphate from D-ribose 5-phosphate and D-xylulose 5-phosphate (non-oxidative stage): step 2/3. Functionally, transaldolase is important for the balance of metabolites in the pentose-phosphate pathway. This is Transaldolase (tal1) from Schizosaccharomyces pombe (strain 972 / ATCC 24843) (Fission yeast).